Consider the following 375-residue polypeptide: Succinyl-diaminopimelate desuccinylase (375 aa).

Histidine 66 provides a ligand contact to Zn(2+). Residue aspartate 68 is part of the active site. Residue aspartate 99 coordinates Zn(2+). Glutamate 133 (proton acceptor) is an active-site residue. Positions 134, 162, and 348 each coordinate Zn(2+).

Belongs to the peptidase M20A family. DapE subfamily. Homodimer. It depends on Zn(2+) as a cofactor. The cofactor is Co(2+).

It carries out the reaction N-succinyl-(2S,6S)-2,6-diaminopimelate + H2O = (2S,6S)-2,6-diaminopimelate + succinate. It functions in the pathway amino-acid biosynthesis; L-lysine biosynthesis via DAP pathway; LL-2,6-diaminopimelate from (S)-tetrahydrodipicolinate (succinylase route): step 3/3. Catalyzes the hydrolysis of N-succinyl-L,L-diaminopimelic acid (SDAP), forming succinate and LL-2,6-diaminopimelate (DAP), an intermediate involved in the bacterial biosynthesis of lysine and meso-diaminopimelic acid, an essential component of bacterial cell walls. In Yersinia pestis bv. Antiqua (strain Antiqua), this protein is Succinyl-diaminopimelate desuccinylase.